The sequence spans 119 residues: Large ribosomal subunit protein uL18 (119 aa).

It belongs to the universal ribosomal protein uL18 family. Part of the 50S ribosomal subunit; part of the 5S rRNA/L5/L18/L25 subcomplex. Contacts the 5S and 23S rRNAs.

In terms of biological role, this is one of the proteins that bind and probably mediate the attachment of the 5S RNA into the large ribosomal subunit, where it forms part of the central protuberance. In Legionella pneumophila (strain Paris), this protein is Large ribosomal subunit protein uL18.